Consider the following 922-residue polypeptide: MAGAAPVYCVCRQPYDVSRFMIECDICKDWFHSSCVKVEEHQAADIDLYHCPNCEVLHGPSQLKKRRNWHRHDYTEPDDGTKPVQAGTRTFIQQLQARSFPSADDLLLKMNGSQLTQRYLEKQGFNLPIMVPRLDDLGLRLPPPTFSVMDVERYVGGEKIIDVIDVARQADSKMKLKNFVKYFMNPDRPKVLNVISLEFSDTKMADLVKVPDISKKLSWVENYWPDDSFFTKPFVQKYCLMGVQDSYTDFHIDFGGTSVWYHVLWGEKVFYLIKPSDENLALYESWSSSVTQSEEFFGDKVDKCYKCVVKQGHTLFVPTGWIHAVLTSQDCMAFGGNFLHNLNIGMQLRCYEMEKRLKTPDLFKFPFFEAICWFVAKNLLETLKELKEDGFHPPNYLKHGVKALISALKSWMKKESVAEHAFEIPDNIRPGHLIKELSKVIRSVEEEGNRPVKSQGIHGHCPVSRSSHEKSSHHSGRKARRLRDHSTKTPTNLDILEHHTREVLKRLEMSPWEEDAGTYKLNMRFNKPLLPSSTEPDQKVRDNGIRLLLSNGRIIRDERQPFTDRSLYTADSEDEDDRARSRKAKDIKQEKPCSTSGMEDKAETQKPLNMFFESVKSELRNGSSEYSDISDSEGSEDNCTNQKHFSEESESSGDDDDEEEEEEEERQEPIRNLKEEHSGRRLPCDPNFPWPDHDSPQKRECPTSTSMEQEAVQGMLSMASLHYPSALPTPAKSTDCNIRGGYPQLHIRVSQGNGKEHLDSHSHKAANSDHHVKDEGEFSALDWIRQPDASCRLSPQDSCQVPQSLRREFAHEEYEKAPEDKHYLEIEHWDSAEYQPEKYDPESSMSSGECHLSDGSLSPTRIYGDTAAAVPLHPTKRPASNPPPISNQATKGKRPKKGMATAKQRLGKILKLNRNGHARFFV.

A PHD-type zinc finger spans residues Pro-6 to Leu-57. Positions Phe-199 to Lys-355 constitute a JmjC domain. Residue Thr-248 coordinates substrate. The Fe cation site is built by His-251 and Asp-253. Lys-268 contributes to the substrate binding site. A Fe cation-binding site is contributed by His-323. Disordered regions lie at residues Glu-445–Pro-490, Arg-565–Pro-607, Gly-622–Ala-711, Gly-754–Lys-773, and Leu-872–Ala-902. Residues His-473–Arg-483 show a composition bias toward basic residues. A compositionally biased stretch (acidic residues) spans Glu-648–Arg-666. Basic and acidic residues-rich tracts occupy residues Gln-667 to Pro-683 and Pro-691 to Cys-701.

This sequence belongs to the JHDM1 histone demethylase family. JHDM1D subfamily. It depends on Fe(2+) as a cofactor.

It localises to the nucleus. In terms of biological role, histone demethylase required for brain development. Specifically demethylates dimethylated 'Lys-9' and 'Lys-27' (H3K9me2 and H3K27me2, respectively) of histone H3 and monomethylated histone H4 'Lys-20' residue (H4K20Me1), thereby playing a central role in histone code. In Xenopus tropicalis (Western clawed frog), this protein is Lysine-specific demethylase 7A (kdm7a).